The sequence spans 560 residues: Putative transport protein VSAL_I2029 (560 aa).

5 helical membrane passes run 14–34 (ILLL…KIGS), 37–57 (LGSS…GYTF), 66–86 (FMLF…GIFL), 94–114 (LLVL…GYYF), and 161–181 (NLSV…ILLA). 2 RCK C-terminal domains span residues 203–292 (RGIG…FRNG) and 293–376 (KEVF…KIGF). The next 5 membrane-spanning stretches (helical) occupy residues 386–406 (LLAF…TMSF), 409–429 (VTFG…LGFL), 451–471 (GLLV…IEYF), 478–498 (VLAA…LVGA), and 539–559 (AGTY…MILL).

Belongs to the AAE transporter (TC 2.A.81) family. YbjL subfamily.

The protein localises to the cell membrane. The sequence is that of Putative transport protein VSAL_I2029 from Aliivibrio salmonicida (strain LFI1238) (Vibrio salmonicida (strain LFI1238)).